Consider the following 449-residue polypeptide: GTP-binding protein A (449 aa).

The segment at 1–77 (MFNINPYKSK…LSSKTENSLS (77 aa)) is disordered. Composition is skewed to low complexity over residues 8–46 (KSKT…SSSS) and 67–77 (SLSSKTENSLS). One can recognise an AIG1-type G domain in the interval 149-386 (QNECNVLLLG…FMGHLRAKNK (238 aa)). Positions 158–165 (GRTGVGKS) are G1. 158–165 (GRTGVGKS) provides a ligand contact to GTP. The interval 183–187 (SCTQD) is G2. Positions 204–207 (DTPG) are G3. The interval 275–278 (TYAN) is G4. A G5 region spans residues 336–338 (ENS).

The protein belongs to the TRAFAC class TrmE-Era-EngA-EngB-Septin-like GTPase superfamily. AIG1/Toc34/Toc159-like paraseptin GTPase family. IAN subfamily.

In Dictyostelium discoideum (Social amoeba), this protein is GTP-binding protein A (gtpA).